A 356-amino-acid polypeptide reads, in one-letter code: Protein translocase subunit SecY (356 aa).

8 helical membrane-spanning segments follow: residues 24–44 (LFVI…IPGI), 77–97 (IFAL…LLTV), 125–145 (LVLA…MPGM), 154–174 (FAFY…LMWL), 183–203 (IGNG…PPAV), 217–237 (FLLL…VVFI), 274–294 (VIPA…ASWF), and 317–337 (YVLL…ALVF).

The protein belongs to the SecY/SEC61-alpha family. In terms of assembly, component of the Sec protein translocase complex. Heterotrimer consisting of SecY, SecE and SecG subunits. The heterotrimers can form oligomers, although 1 heterotrimer is thought to be able to translocate proteins. Interacts with the ribosome. Interacts with SecDF, and other proteins may be involved. Interacts with SecA.

The protein resides in the cell membrane. Functionally, the central subunit of the protein translocation channel SecYEG. Consists of two halves formed by TMs 1-5 and 6-10. These two domains form a lateral gate at the front which open onto the bilayer between TMs 2 and 7, and are clamped together by SecE at the back. The channel is closed by both a pore ring composed of hydrophobic SecY resides and a short helix (helix 2A) on the extracellular side of the membrane which forms a plug. The plug probably moves laterally to allow the channel to open. The ring and the pore may move independently. This is Protein translocase subunit SecY from Buchnera aphidicola subsp. Acyrthosiphon kondoi (Acyrthosiphon kondoi symbiotic bacterium).